Consider the following 260-residue polypeptide: MSTTAAIQASNISVTFGHRTILDKIDIEIFSGQVTALLGPNGAGKSTLLKILSGEISSTGKMAYFGVPQALWQPNELAKHLAILPQQSTLSFPFIAQEVVELGALPLNLSHQQVSEVALHYMQQTDISDRANNLYPALSGGEKQRLHLARVLTQLHHSGDKKILMLDEPTSALDLAHQHNTLRIARSLAHQEQCAVVVVLHDLNLAAQYADRMVMLHNGKLVCDAPPWEALNAERIEQVYGYSSLVAAHPTMDFPMVYPI.

The 237-residue stretch at 7–243 (IQASNISVTF…ERIEQVYGYS (237 aa)) folds into the ABC transporter domain. 39 to 46 (GPNGAGKS) contacts ATP.

The protein belongs to the ABC transporter superfamily. Heme (hemin) importer (TC 3.A.1.14.5) family. In terms of assembly, the complex is composed of two ATP-binding proteins (HmuV), two transmembrane proteins (HmuU) and a solute-binding protein (HmuT).

It is found in the cell inner membrane. Its function is as follows. Part of the ABC transporter complex HmuTUV involved in hemin import. Responsible for energy coupling to the transport system. In Vibrio anguillarum (strain ATCC 68554 / 775) (Listonella anguillarum), this protein is Hemin import ATP-binding protein HmuV.